A 301-amino-acid chain; its full sequence is Probable alpha-L-glutamate ligase (301 aa).

The ATP-grasp domain maps to 104–287; the sequence is MQLLSRKGIG…VAGLIIDFIE (184 aa). Residues lysine 141, 178-179, aspartate 187, and 211-213 contribute to the ATP site; these read EF and RSN. Aspartate 248, glutamate 260, and asparagine 262 together coordinate Mg(2+). 3 residues coordinate Mn(2+): aspartate 248, glutamate 260, and asparagine 262.

Belongs to the RimK family. Mg(2+) is required as a cofactor. Requires Mn(2+) as cofactor.

This chain is Probable alpha-L-glutamate ligase, found in Aliivibrio fischeri (strain MJ11) (Vibrio fischeri).